Reading from the N-terminus, the 85-residue chain is Cytochrome c6 (85 aa).

Residues C14, C17, H18, and M58 each contribute to the heme c site.

It belongs to the cytochrome c family. PetJ subfamily. In terms of assembly, monomer. In terms of processing, binds 1 heme c group covalently per subunit.

The protein localises to the cellular thylakoid lumen. Functionally, functions as an electron carrier between membrane-bound cytochrome b6-f and photosystem I in oxygenic photosynthesis. This Leptolyngbya boryana (Plectonema boryanum) protein is Cytochrome c6 (petJ).